The chain runs to 580 residues: E3 ubiquitin-protein ligase TRIM45 (580 aa).

The segment at 29-98 (CPLCLGLFKA…QIGILCPVCD (70 aa)) adopts an RING-type zinc-finger fold. 2 consecutive B box-type zinc fingers follow at residues 130–176 (GQGL…MVDL) and 186–227 (GKPI…CDFT). Residues cysteine 135, cysteine 138, cysteine 158, histidine 162, cysteine 191, histidine 194, cysteine 214, and histidine 219 each contribute to the Zn(2+) site. A coiled-coil region spans residues 281 to 335 (SEGYIKAIEEHRDKLLKQLEDIRAQKENSLQLQKAQLEQLLADMRTGVEFTEHLL). Residues 394-497 (TKEVDPAKCV…VQGSPFTVMV (104 aa)) form a Filamin repeat.

The protein belongs to the TRIM/RBCC family. As to expression, expressed in skeletal muscle, brain, heart and pancreas.

Its subcellular location is the cytoplasm. It is found in the nucleus. The catalysed reaction is S-ubiquitinyl-[E2 ubiquitin-conjugating enzyme]-L-cysteine + [acceptor protein]-L-lysine = [E2 ubiquitin-conjugating enzyme]-L-cysteine + N(6)-ubiquitinyl-[acceptor protein]-L-lysine.. Its function is as follows. E3 ubiquitin-protein ligase that plays a role in the regulation of inflammatory response. Mechanistically, mediates the 'Lys-48'-linked polyubiquitination of TAB2, a regulatory protein of the kinase TAK1, leading to its degradation via the proteasomal pathway and inhibition of the TLR-mediated inflammatory immune response. May act as a transcriptional repressor in mitogen-activated protein kinase signaling pathway. In Homo sapiens (Human), this protein is E3 ubiquitin-protein ligase TRIM45 (TRIM45).